Reading from the N-terminus, the 159-residue chain is U1 small nuclear ribonucleoprotein C (159 aa).

The segment at 4–36 (FYCDYCDTYLTHDSPSVRKTHCSGRKHKENVKD) adopts a Matrin-type zinc-finger fold. At tyrosine 8 the chain carries Phosphotyrosine. The residue at position 17 (serine 17) is a Phosphoserine. Lysine 52 carries the N6-acetyllysine modification. A disordered region spans residues 62–96 (IPPAPFSAPPPAGAMIPPPPSLPGPPRPGMMPAPH). Residues 63–92 (PPAPFSAPPPAGAMIPPPPSLPGPPRPGMM) are compositionally biased toward pro residues.

The protein belongs to the U1 small nuclear ribonucleoprotein C family. Component of the U1 snRNP. The U1 snRNP is composed of the U1 snRNA and the 7 core Sm proteins SNRPB, SNRPD1, SNRPD2, SNRPD3, SNRPE, SNRPF and SNRPG that assemble in a heptameric protein ring on the Sm site of the small nuclear RNA to form the core snRNP, and at least 3 U1 snRNP-specific proteins SNRNP70/U1-70K, SNRPA/U1-A and SNRPC/U1-C. SNRPC/U1-C interacts with U1 snRNA and the 5' splice-site region of the pre-mRNA. Interacts (via N-terminus) with TIA1 (via C-terminus); thereby promoting spliceosomal U1 snRNP recruitment to 5' splice sites.

It is found in the nucleus. Its function is as follows. Component of the spliceosomal U1 snRNP, which is essential for recognition of the pre-mRNA 5' splice-site and the subsequent assembly of the spliceosome. SNRPC/U1-C is directly involved in initial 5' splice-site recognition for both constitutive and regulated alternative splicing. The interaction with the 5' splice-site seems to precede base-pairing between the pre-mRNA and the U1 snRNA. Stimulates commitment or early (E) complex formation by stabilizing the base pairing of the 5' end of the U1 snRNA and the 5' splice-site region. The polypeptide is U1 small nuclear ribonucleoprotein C (Rattus norvegicus (Rat)).